Consider the following 250-residue polypeptide: Probable transcriptional regulatory protein Rxyl_1318 (250 aa).

It belongs to the TACO1 family.

It is found in the cytoplasm. The chain is Probable transcriptional regulatory protein Rxyl_1318 from Rubrobacter xylanophilus (strain DSM 9941 / JCM 11954 / NBRC 16129 / PRD-1).